The primary structure comprises 145 residues: Cell division protein SepF (145 aa).

The segment at 21–41 is disordered; sequence DKPQESTKAKEENVKPKHETP. Residues 23–41 are compositionally biased toward basic and acidic residues; sequence PQESTKAKEENVKPKHETP.

This sequence belongs to the SepF family. As to quaternary structure, homodimer. Interacts with FtsZ.

The protein resides in the cytoplasm. Its function is as follows. Cell division protein that is part of the divisome complex and is recruited early to the Z-ring. Probably stimulates Z-ring formation, perhaps through the cross-linking of FtsZ protofilaments. Its function overlaps with FtsA. The chain is Cell division protein SepF from Caldicellulosiruptor saccharolyticus (strain ATCC 43494 / DSM 8903 / Tp8T 6331).